The sequence spans 519 residues: Signal transduction histidine-protein kinase/phosphatase MprB (519 aa).

Residues 1–26 (MVRFAWRRRASLRATSSLSLRWRVML) lie on the Cytoplasmic side of the membrane. Residues 27-47 (LAMSMVAMVVVLMAFAVYVVI) traverse the membrane as a helical segment. Topologically, residues 48–163 (SAALYSDIDN…PTEAVMTKLR (116 aa)) are extracellular. The chain crosses the membrane as a helical span at residues 164–184 (WVLLIVGSLGVAVAAVAGGMV). Residues 185-519 (TRAGLRPVGR…SVDYQSARAR (335 aa)) lie on the Cytoplasmic side of the membrane. The HAMP domain occupies 186 to 238 (RAGLRPVGRLTEAAERVARTDDLRPIPVFGSDELARLTEAFNLMLRALAESRE). The Histidine kinase domain maps to 246-466 (DAGHELRTPL…SIYVLLPGRP (221 aa)). His-249 carries the phosphohistidine; by autocatalysis modification.

It depends on Mg(2+) as a cofactor. Requires Mn(2+) as cofactor. Autophosphorylated.

Its subcellular location is the cell membrane. It catalyses the reaction ATP + protein L-histidine = ADP + protein N-phospho-L-histidine.. In terms of biological role, member of the two-component regulatory system MprB/MprA which contributes to maintaining a balance among several systems involved in stress resistance and is required for establishment and maintenance of persistent infection in the host. In response to environmental signals MprB acts both as a membrane-associated protein kinase that undergoes autophosphorylation and subsequently transfers the phosphate to MprA, and a protein phosphatase that dephosphorylates phospho-MprA. This is Signal transduction histidine-protein kinase/phosphatase MprB (mprB) from Mycobacterium leprae (strain TN).